We begin with the raw amino-acid sequence, 409 residues long: Arginine deiminase (409 aa).

The active-site Amidino-cysteine intermediate is Cys399.

Belongs to the arginine deiminase family.

It is found in the cytoplasm. It carries out the reaction L-arginine + H2O = L-citrulline + NH4(+). The protein operates within amino-acid degradation; L-arginine degradation via ADI pathway; carbamoyl phosphate from L-arginine: step 1/2. The protein is Arginine deiminase of Borrelia recurrentis (strain A1).